A 312-amino-acid polypeptide reads, in one-letter code: Taste receptor type 2 member 9 (312 aa).

Over 1-9 (MPSAIEAIY) the chain is Extracellular. Residues 10 to 32 (IILIAGELTIGIWGNGFIVLVNC) traverse the membrane as a helical segment. At 33–52 (IDWLKRRDVSLIDIILISLA) the chain is on the cytoplasmic side. The helical transmembrane segment at 53-72 (ISRICLLXVISLDGFFMLLF) threads the bilayer. The Extracellular segment spans residues 73 to 86 (PTTYGNSVLVSIVB). The chain crosses the membrane as a helical span at residues 87-109 (IVWTFANNSSLWFTSCLSIFYLL). Topologically, residues 110–128 (KIANISHPFFFWLKLKINK) are cytoplasmic. The helical transmembrane segment at 129–146 (VILAILLGSFLISLVISV) threads the bilayer. At 147-180 (XMNDDMWYHLFKVSHEENITWEFKVSKIPGTFKQ) the chain is on the extracellular side. N-linked (GlcNAc...) asparagine glycosylation occurs at Asn164. Residues 181-203 (LTLNLGAMVPFILCLISFSLLLF) form a helical membrane-spanning segment. Over 204 to 234 (SLVRHTKQIQLXATGFRDPSTEAHMRAIKAV) the chain is Cytoplasmic. Residues 235 to 257 (IIFLLLLIVYYPVFLVMTSSALI) form a helical membrane-spanning segment. The Extracellular portion of the chain corresponds to 258–261 (PQGK). Residues 262–284 (LVLMIGDIVTITFPSSHSFILIM) form a helical membrane-spanning segment. Residues 285-312 (GNSKLREAFLKMLRFVKRFLRRRKPFVP) lie on the Cytoplasmic side of the membrane.

It belongs to the G-protein coupled receptor T2R family.

The protein localises to the membrane. Its function is as follows. Gustducin-coupled receptor implicated in the perception of bitter compounds in the oral cavity and the gastrointestinal tract. Signals through PLCB2 and the calcium-regulated cation channel TRPM5. This is Taste receptor type 2 member 9 (TAS2R9) from Pongo pygmaeus (Bornean orangutan).